We begin with the raw amino-acid sequence, 298 residues long: ADP/ATP translocase 3 (298 aa).

Methionine 1 is subject to N-acetylmethionine. The Mitochondrial intermembrane segment spans residues 1–7 (MTEQAIS). Threonine 2 is modified (N-acetylthreonine; in ADP/ATP translocase 3, N-terminally processed). Residues 6-98 (ISFAKDFLAG…FAFKDKYKQI (93 aa)) form a Solcar 1 repeat. A helical membrane pass occupies residues 8 to 37 (FAKDFLAGGIAAAISKTAVAPIERVKLLLQ). The Mitochondrial matrix portion of the chain corresponds to 38 to 74 (VQHASKQIAADKQYKGIVDCIVRIPKEQGVLSFWRGN). Lysine 52 bears the N6,N6,N6-trimethyllysine mark. The helical transmembrane segment at 75-99 (LANVIRYFPTQALNFAFKDKYKQIF) threads the bilayer. ADP contacts are provided by arginine 80 and lysine 92. Topologically, residues 100–109 (LGGVDKHTQF) are mitochondrial intermembrane. Residue lysine 105 is modified to N6-acetyllysine. The chain crosses the membrane as a helical span at residues 110–130 (WRYFAGNLASGGAAGATSLCF). Solcar repeat units follow at residues 111–201 (RYFA…AKGM) and 212–297 (VSWM…LKKV). Topologically, residues 131 to 178 (VYPLDFARTRLAADVGKSATEREFKGLGDCLVKITKSDGIRGLYQGFN) are mitochondrial matrix. Residues 179-199 (VSVQGIIIYRAAYFGVYGTAK) traverse the membrane as a helical segment. Over 200-210 (GMLPDPRNTHI) the chain is Mitochondrial intermembrane. Residues 211–231 (VVSWMIAQTVTAVAGVFSYPF) traverse the membrane as a helical segment. Residues 232 to 273 (DTVRRRMMMQSGRKGADIMYKGTLDCWRKIFKDEGGKAFFKG) lie on the Mitochondrial matrix side of the membrane. Residue arginine 235 participates in ADP binding. The important for transport activity stretch occupies residues 235–240 (RRRMMM). Positions 235-240 (RRRMMM) match the Nucleotide carrier signature motif motif. N6-acetyllysine is present on lysine 268. The chain crosses the membrane as a helical span at residues 274–291 (AWSNVLRGMGGAFVLVLY). Over 292-298 (DELKKVI) the chain is Mitochondrial intermembrane.

It belongs to the mitochondrial carrier (TC 2.A.29) family. In terms of assembly, monomer. Found in a complex with ARL2, ARL2BP and SLC25A6/ANT3. In terms of processing, trimethylated by ANTKMT at Lys-52.

It localises to the mitochondrion inner membrane. It is found in the membrane. The catalysed reaction is ADP(in) + ATP(out) = ADP(out) + ATP(in). The enzyme catalyses H(+)(in) = H(+)(out). Its activity is regulated as follows. The matrix-open state (m-state) is inhibited by the membrane-permeable bongkrekic acid (BKA). The cytoplasmic-open state (c-state) is inhibited by the membrane-impermeable toxic inhibitor carboxyatractyloside (CATR). Proton transporter activity is inhibited by ADP:ATP antiporter activity. ADP:ATP antiporter that mediates import of ADP into the mitochondrial matrix for ATP synthesis, and export of ATP out to fuel the cell. Cycles between the cytoplasmic-open state (c-state) and the matrix-open state (m-state): operates by the alternating access mechanism with a single substrate-binding site intermittently exposed to either the cytosolic (c-state) or matrix (m-state) side of the inner mitochondrial membrane. In addition to its ADP:ATP antiporter activity, also involved in mitochondrial uncoupling and mitochondrial permeability transition pore (mPTP) activity. Plays a role in mitochondrial uncoupling by acting as a proton transporter: proton transport uncouples the proton flows via the electron transport chain and ATP synthase to reduce the efficiency of ATP production and cause mitochondrial thermogenesis. Proton transporter activity is inhibited by ADP:ATP antiporter activity, suggesting that SLC25A6/ANT3 acts as a master regulator of mitochondrial energy output by maintaining a delicate balance between ATP production (ADP:ATP antiporter activity) and thermogenesis (proton transporter activity). Proton transporter activity requires free fatty acids as cofactor, but does not transport it. Also plays a key role in mPTP opening, a non-specific pore that enables free passage of the mitochondrial membranes to solutes of up to 1.5 kDa, and which contributes to cell death. It is however unclear if SLC25A6/ANT3 constitutes a pore-forming component of mPTP or regulates it. The polypeptide is ADP/ATP translocase 3 (Sus scrofa (Pig)).